The sequence spans 436 residues: Protein 60A (436 aa).

The N-terminal stretch at 1 to 27 is a signal peptide; the sequence is MTASLVVLPSLWLILIIFTAPYTHCTQ. The propeptide occupies 28 to 317; the sequence is SGIYIDNGKD…STLHQRKKSK (290 aa). Residues asparagine 102, asparagine 114, asparagine 217, and asparagine 229 are each glycosylated (N-linked (GlcNAc...) asparagine). Positions 293-322 are disordered; it reads IKSTSGHSTQKRTKRSTLHQRKKSKSEPVN. Positions 301–316 are enriched in basic residues; sequence TQKRTKRSTLHQRKKS. 3 disulfides stabilise this stretch: cysteine 335/cysteine 401, cysteine 364/cysteine 433, and cysteine 368/cysteine 435. N-linked (GlcNAc...) asparagine glycosylation is present at asparagine 377.

This sequence belongs to the TGF-beta family. Homodimer; disulfide-linked.

Its subcellular location is the secreted. This is Protein 60A (gbb) from Drosophila virilis (Fruit fly).